Consider the following 199-residue polypeptide: Recombination protein RecR (199 aa).

The C4-type zinc-finger motif lies at 58–73 (CSVCGNLTDTDVCPLC). The Toprim domain occupies 81-176 (SVICVVEDPR…KTTRIAHGIP (96 aa)).

Belongs to the RecR family.

In terms of biological role, may play a role in DNA repair. It seems to be involved in an RecBC-independent recombinational process of DNA repair. It may act with RecF and RecO. This is Recombination protein RecR from Acetivibrio thermocellus (strain ATCC 27405 / DSM 1237 / JCM 9322 / NBRC 103400 / NCIMB 10682 / NRRL B-4536 / VPI 7372) (Clostridium thermocellum).